Here is a 159-residue protein sequence, read N- to C-terminus: Ribosomal RNA large subunit methyltransferase H (159 aa).

S-adenosyl-L-methionine contacts are provided by residues leucine 76, glycine 108, and 127–132 (FSKMTL).

This sequence belongs to the RNA methyltransferase RlmH family. As to quaternary structure, homodimer.

It is found in the cytoplasm. It catalyses the reaction pseudouridine(1915) in 23S rRNA + S-adenosyl-L-methionine = N(3)-methylpseudouridine(1915) in 23S rRNA + S-adenosyl-L-homocysteine + H(+). Specifically methylates the pseudouridine at position 1915 (m3Psi1915) in 23S rRNA. The chain is Ribosomal RNA large subunit methyltransferase H from Bacillus anthracis (strain CDC 684 / NRRL 3495).